Reading from the N-terminus, the 426-residue chain is C4-dicarboxylate transport protein (426 aa).

A run of 8 helical transmembrane segments spans residues 8–28, 44–64, 78–98, 148–168, 184–204, 222–242, 297–317, and 355–375; these read VLYV…HFYP, LIKM…IAGM, LLYF…ATHL, GEIL…AHVG, ILFG…FGAM, LIGT…GFIA, GYSF…LFIA, and AATL…ILGI.

The protein belongs to the dicarboxylate/amino acid:cation symporter (DAACS) (TC 2.A.23) family.

It localises to the cell inner membrane. In terms of biological role, responsible for the transport of dicarboxylates such as succinate, fumarate, and malate from the periplasm across the membrane. The polypeptide is C4-dicarboxylate transport protein (Paraburkholderia phymatum (strain DSM 17167 / CIP 108236 / LMG 21445 / STM815) (Burkholderia phymatum)).